Consider the following 488-residue polypeptide: Malonate-semialdehyde dehydrogenase 2 (488 aa).

NAD(+) contacts are provided by Phe155, Lys179, Glu182, Arg183, and Ser232. The active-site Nucleophile is Cys287. NAD(+) is bound at residue Glu387.

This sequence belongs to the aldehyde dehydrogenase family. IolA subfamily. Homotetramer.

The catalysed reaction is 3-oxopropanoate + NAD(+) + CoA + H2O = hydrogencarbonate + acetyl-CoA + NADH + H(+). It carries out the reaction 2-methyl-3-oxopropanoate + NAD(+) + CoA + H2O = propanoyl-CoA + hydrogencarbonate + NADH + H(+). It functions in the pathway polyol metabolism; myo-inositol degradation into acetyl-CoA; acetyl-CoA from myo-inositol: step 7/7. Its function is as follows. Catalyzes the oxidation of malonate semialdehyde (MSA) and methylmalonate semialdehyde (MMSA) into acetyl-CoA and propanoyl-CoA, respectively. Is involved in a myo-inositol catabolic pathway. Bicarbonate, and not CO2, is the end-product of the enzymatic reaction. This Bacillus cereus (strain ZK / E33L) protein is Malonate-semialdehyde dehydrogenase 2.